A 303-amino-acid polypeptide reads, in one-letter code: Inosose dehydratase (303 aa).

This sequence belongs to the IolE/MocC family. The cofactor is glutathione. Requires Co(2+) as cofactor. Mn(2+) serves as cofactor.

The enzyme catalyses scyllo-inosose = 3D-3,5/4-trihydroxycyclohexane-1,2-dione + H2O. Its pathway is polyol metabolism; myo-inositol degradation into acetyl-CoA; acetyl-CoA from myo-inositol: step 2/7. Catalyzes the dehydration of inosose (2-keto-myo-inositol, 2KMI or 2,4,6/3,5-pentahydroxycyclohexanone) to 3D-(3,5/4)-trihydroxycyclohexane-1,2-dione (D-2,3-diketo-4-deoxy-epi-inositol). This chain is Inosose dehydratase, found in Halalkalibacterium halodurans (strain ATCC BAA-125 / DSM 18197 / FERM 7344 / JCM 9153 / C-125) (Bacillus halodurans).